A 523-amino-acid chain; its full sequence is DELLA protein RGL3 (523 aa).

The tract at residues 1–28 is disordered; sequence MKRSHQETSVEEEAPSMVEKLENGCGGG. A DELLA motif motif is present at residues 34–38; sequence DEFLA. The LEXLE motif motif lies at 56–60; it reads LEQLE. The VHYNP motif signature appears at 78-82; it reads VHYNP. The region spanning 148–516 is the GRAS domain; the sequence is VLIEETGVRL…KPLIAASAWK (369 aa). The segment at 155–209 is leucine repeat I (LRI); it reads VRLVQALVACAEAVQLENLSLADALVKRVGLLAASQAGAMGKVATYFAEALARRI. The tract at residues 228-293 is VHIID; it reads QMNFYDSCPY…GGPPSFRLTG (66 aa). Positions 259–263 match the VHIID motif; the sequence is VHVID. The segment at 305 to 337 is leucine repeat II (LRII); that stretch reads ELGWKLAQLAQAIGVEFKFNGLTTERLSDLEPD. The tract at residues 348-437 is PFYRE; that stretch reads LVVNSVFELH…EVYLGRQILN (90 aa). Positions 356–360 match the LXXLL motif motif; the sequence is LHPVL. Residues 440-516 are SAW; the sequence is ATEGSDRIER…KPLIAASAWK (77 aa).

This sequence belongs to the GRAS family. DELLA subfamily. As to quaternary structure, interacts directly with the GID2/SLY1 component of the SCF(GID2) complex, suggesting that it may be ubiquitinated. Interacts (via N-terminus) with GID1A, GID1B and GID1B (via N-terminus). Interacts with the BOI proteins BOI, BRG1, BRG2 and BRG3. Post-translationally, phosphorylated. In terms of processing, may be ubiquitinated. As to expression, expressed at very low level. Mainly expressed in germinating seeds and flowers and siliques. Not expressed in other tissues.

Its subcellular location is the nucleus. Functionally, probable transcriptional regulator that acts as a repressor of the gibberellin (GA) signaling pathway. No effect of the BOI proteins on its stability. Probably acts by participating in large multiprotein complexes that repress transcription of GA-inducible genes. Its activity may be regulated by phytohormones such as auxin and ethylene. This is DELLA protein RGL3 (RGL3) from Arabidopsis thaliana (Mouse-ear cress).